The following is an 88-amino-acid chain: LYR motif-containing protein 2 (88 aa).

Residues 1-19 (MATSRLPPATLTLKQFMRR) constitute a mitochondrion transit peptide.

The protein belongs to the complex I LYR family.

The protein localises to the mitochondrion. Its function is as follows. Involved in efficient integration of the N-module into mitochondrial respiratory chain complex I. This Bos taurus (Bovine) protein is LYR motif-containing protein 2 (LYRM2).